The primary structure comprises 330 residues: Ketol-acid reductoisomerase (NADP(+)) (330 aa).

In terms of domain architecture, KARI N-terminal Rossmann spans 3–184; sequence LPVYYDKDID…GGGRMGVLET (182 aa). Residues 26–29, Ser-52, and Ser-54 contribute to the NADP(+) site; that span reads YGAQ. The active site involves His-109. NADP(+) is bound at residue Gly-135. The 145-residue stretch at 185–329 folds into the KARI C-terminal knotted domain; that stretch reads SFKEECESDL…EILRAPFNHK (145 aa). Asp-193, Glu-197, Glu-229, and Glu-233 together coordinate Mg(2+). Substrate is bound at residue Ser-254.

It belongs to the ketol-acid reductoisomerase family. Mg(2+) is required as a cofactor.

It catalyses the reaction (2R)-2,3-dihydroxy-3-methylbutanoate + NADP(+) = (2S)-2-acetolactate + NADPH + H(+). The catalysed reaction is (2R,3R)-2,3-dihydroxy-3-methylpentanoate + NADP(+) = (S)-2-ethyl-2-hydroxy-3-oxobutanoate + NADPH + H(+). The protein operates within amino-acid biosynthesis; L-isoleucine biosynthesis; L-isoleucine from 2-oxobutanoate: step 2/4. It participates in amino-acid biosynthesis; L-valine biosynthesis; L-valine from pyruvate: step 2/4. Its function is as follows. Involved in the biosynthesis of branched-chain amino acids (BCAA). Catalyzes an alkyl-migration followed by a ketol-acid reduction of (S)-2-acetolactate (S2AL) to yield (R)-2,3-dihydroxy-isovalerate. In the isomerase reaction, S2AL is rearranged via a Mg-dependent methyl migration to produce 3-hydroxy-3-methyl-2-ketobutyrate (HMKB). In the reductase reaction, this 2-ketoacid undergoes a metal-dependent reduction by NADPH to yield (R)-2,3-dihydroxy-isovalerate. The polypeptide is Ketol-acid reductoisomerase (NADP(+)) (Helicobacter pylori (strain ATCC 700392 / 26695) (Campylobacter pylori)).